The chain runs to 339 residues: DNA-directed RNA polymerase subunit alpha (339 aa).

The segment at 1-235 (MVLQKNWQSL…DQLQLFINFD (235 aa)) is alpha N-terminal domain (alpha-NTD). An alpha C-terminal domain (alpha-CTD) region spans residues 251–339 (FNRNLLRKVD…DLAKRLDETF (89 aa)).

This sequence belongs to the RNA polymerase alpha chain family. As to quaternary structure, homodimer. The RNAP catalytic core consists of 2 alpha, 1 beta, 1 beta' and 1 omega subunit. When a sigma factor is associated with the core the holoenzyme is formed, which can initiate transcription.

The enzyme catalyses RNA(n) + a ribonucleoside 5'-triphosphate = RNA(n+1) + diphosphate. Functionally, DNA-dependent RNA polymerase catalyzes the transcription of DNA into RNA using the four ribonucleoside triphosphates as substrates. The polypeptide is DNA-directed RNA polymerase subunit alpha (Gluconobacter oxydans (strain 621H) (Gluconobacter suboxydans)).